The chain runs to 196 residues: Pycsar effector protein GmPycTM (196 aa).

3 consecutive transmembrane segments (helical) span residues 34 to 54 (ISFS…SGII), 82 to 102 (ITTI…TYLF), and 176 to 196 (VNWL…FLFL).

The protein localises to the cell inner membrane. Functionally, pycsar (pyrimidine cyclase system for antiphage resistance) provides immunity against bacteriophage. The pyrimidine cyclase (PycC) synthesizes cyclic nucleotides in response to infection; these serve as specific second messenger signals. The signals activate the adjacent effector, leading to bacterial cell death and abortive phage infection. A clade C Pycsar system. The effector gene of a two-gene Pycsar system. Expression of this and adjacent uridylate cyclase GmPycC (AC P0DV42) probably confers resistance to bacteriophage. The genes are probably only expressed in response to bacteriophage infection. Probably only responds to cUMP (produced by its cognate NTP cyclase), acts by impairing membrane integrity. The polypeptide is Pycsar effector protein GmPycTM (Gulbenkiania mobilis).